A 380-amino-acid polypeptide reads, in one-letter code: Cytochrome b (380 aa).

A run of 4 helical transmembrane segments spans residues 34–54 (YGSL…FLAM), 78–99 (WLMR…YLHI), 114–134 (WNIG…GYVL), and 179–199 (FFTF…LHLL). 2 residues coordinate heme b: His-84 and His-98. Positions 183 and 197 each coordinate heme b. An a ubiquinone-binding site is contributed by His-202. 4 consecutive transmembrane segments (helical) span residues 227 to 247 (YKDT…STTN), 289 to 309 (LGGV…PSLH), 321 to 341 (LSQL…WIGG), and 348 to 368 (FILI…VLLP).

This sequence belongs to the cytochrome b family. As to quaternary structure, the cytochrome bc1 complex contains 3 respiratory subunits (MT-CYB, CYC1 and UQCRFS1), 2 core proteins (UQCRC1 and UQCRC2) and probably 6 low-molecular weight proteins. Heme b is required as a cofactor.

It is found in the mitochondrion inner membrane. Its function is as follows. Component of the ubiquinol-cytochrome c reductase complex (complex III or cytochrome b-c1 complex) that is part of the mitochondrial respiratory chain. The b-c1 complex mediates electron transfer from ubiquinol to cytochrome c. Contributes to the generation of a proton gradient across the mitochondrial membrane that is then used for ATP synthesis. This is Cytochrome b (mt-cyb) from Typhlonectes natans (Rubber eel).